The following is a 362-amino-acid chain: Cobalt-precorrin-5B C(1)-methyltransferase (362 aa).

This sequence belongs to the CbiD family.

It catalyses the reaction Co-precorrin-5B + S-adenosyl-L-methionine = Co-precorrin-6A + S-adenosyl-L-homocysteine. The protein operates within cofactor biosynthesis; adenosylcobalamin biosynthesis; cob(II)yrinate a,c-diamide from sirohydrochlorin (anaerobic route): step 6/10. Its function is as follows. Catalyzes the methylation of C-1 in cobalt-precorrin-5B to form cobalt-precorrin-6A. The chain is Cobalt-precorrin-5B C(1)-methyltransferase from Methanocaldococcus jannaschii (strain ATCC 43067 / DSM 2661 / JAL-1 / JCM 10045 / NBRC 100440) (Methanococcus jannaschii).